Here is a 306-residue protein sequence, read N- to C-terminus: Ribonuclease Z (306 aa).

7 residues coordinate Zn(2+): H63, H65, D67, H68, H140, D211, and H269. Catalysis depends on D67, which acts as the Proton acceptor.

This sequence belongs to the RNase Z family. Homodimer. Requires Zn(2+) as cofactor.

The enzyme catalyses Endonucleolytic cleavage of RNA, removing extra 3' nucleotides from tRNA precursor, generating 3' termini of tRNAs. A 3'-hydroxy group is left at the tRNA terminus and a 5'-phosphoryl group is left at the trailer molecule.. In terms of biological role, zinc phosphodiesterase, which displays some tRNA 3'-processing endonuclease activity. Probably involved in tRNA maturation, by removing a 3'-trailer from precursor tRNA. The polypeptide is Ribonuclease Z (Listeria monocytogenes serotype 4a (strain HCC23)).